Reading from the N-terminus, the 512-residue chain is Pantothenate transporter FEN2 (512 aa).

At 1-27 (MMKESKSITQHEVERESVSSKRAIKKR) the chain is on the cytoplasmic side. A helical membrane pass occupies residues 28 to 48 (LLLFKIDLFVLSFVCLQYWIN). Residues 49-79 (YVDRVGFTNAYISGMKEDLKMVGNDLTVSNT) lie on the Extracellular side of the membrane. Residues 80-100 (VFMIGYIVGMVPNNLMLLCVP) form a helical membrane-spanning segment. At 101 to 102 (PR) the chain is on the cytoplasmic side. The chain crosses the membrane as a helical span at residues 103–123 (IWLSFCTFAWGLLTLGMYKVT). Over 124–132 (SFKHICAIR) the chain is Extracellular. A helical membrane pass occupies residues 133–153 (FFQALFESCTFSGTHFVLGSW). The Cytoplasmic segment spans residues 154-164 (YKEDELPIRSA). The helical transmembrane segment at 165–185 (IFTGSGLVGSMFSGFMQTSIF) threads the bilayer. The Extracellular segment spans residues 186–198 (THLNGRNGLAGWR). The helical transmembrane segment at 199 to 219 (WLFIIDFCITLPIAIYGFIFF) threads the bilayer. Residues 220-271 (PGLPDQTSAVSKFSMTRYIFNEQELHYARRRLPARDESTRLDWSTIPRVLKR) are Cytoplasmic-facing. Residues 272–292 (WHWWMFSLVWVLGGENLGFAS) traverse the membrane as a helical segment. The Extracellular segment spans residues 293-312 (NSTFALWLQNQKYTLAQRNN). The chain crosses the membrane as a helical span at residues 313–333 (YPSGIFAVGIVSTLCSAVYMS). Residues 334 to 342 (KIPRARHWH) are Cytoplasmic-facing. The helical transmembrane segment at 343 to 363 (VSVFISLVMVIVAVLIRADPL) threads the bilayer. Residues 364-372 (NPKVVFSAQ) are Extracellular-facing. Residues 373–393 (YLGGVAYAGQAVFFSWANIIC) traverse the membrane as a helical segment. Topologically, residues 394 to 401 (HADLQERA) are cytoplasmic. The helical transmembrane segment at 402–422 (IVLASMNMFSGAVNAWWSILF) threads the bilayer. The Extracellular portion of the chain corresponds to 423 to 434 (FASDMVPKFERG). A helical membrane pass occupies residues 435 to 455 (CYALLATAISSGIVSVVIRSL). Over 456 to 512 (QIKENLSKKQVPYIDANDMPGEDDDDDNQDNENDGDDESMEVELHNEEMAEISNPFR) the chain is Cytoplasmic. A disordered region spans residues 468-512 (YIDANDMPGEDDDDDNQDNENDGDDESMEVELHNEEMAEISNPFR). Residues 475–496 (PGEDDDDDNQDNENDGDDESME) show a composition bias toward acidic residues.

Belongs to the major facilitator superfamily. Allantoate permease family.

It is found in the cell membrane. Functionally, transports pantothenate into the cell. Also involved in the catabolite repression-mediated regulation of ergosterol biosynthesis and in fenpropimorph resistance. This chain is Pantothenate transporter FEN2 (FEN2), found in Saccharomyces cerevisiae (strain ATCC 204508 / S288c) (Baker's yeast).